The primary structure comprises 143 residues: MSGRGKTGGKARAKAKSRSSRAGLQFPVGRVHRLLRKGHYAERVGAGAPVYLAAVLEYLTAEILELAGNAARDNKKTRIIPRHLQLAIRNDEELNKLLGGVTIAQGGVLPNIQAVLLPKKSSATVGPKAPAVGKKASQASQEY.

The interval 1–22 is disordered; it reads MSGRGKTGGKARAKAKSRSSRA. Ser-2 is modified (N-acetylserine). A Phosphoserine modification is found at Ser-2. N6-acetyllysine occurs at positions 6 and 10. Over residues 7–19 the composition is skewed to basic residues; it reads TGGKARAKAKSRS. Lys-10 is subject to N6-lactoyllysine; alternate. Glycyl lysine isopeptide (Lys-Gly) (interchain with G-Cter in ubiquitin) cross-links involve residues Lys-14 and Lys-16. Lys-37 carries the N6-acetyllysine; by CREBBP and EP300 modification. Residue Lys-120 forms a Glycyl lysine isopeptide (Lys-Gly) (interchain with G-Cter in ubiquitin) linkage. A phosphoserine mark is found at Ser-121 and Ser-122. The tract at residues 121-143 is disordered; the sequence is SSATVGPKAPAVGKKASQASQEY. Glycyl lysine isopeptide (Lys-Gly) (interchain with G-Cter in SUMO2) cross-links involve residues Lys-128 and Lys-135. At Ser-137 the chain carries Phosphoserine. Ser-140 bears the Phosphoserine; by ATM, ATR and PRKDC mark. Positions 140–141 match the [ST]-Q motif motif; sequence SQ. Tyr-143 bears the Phosphotyrosine; by WSTF mark.

The protein belongs to the histone H2A family. The nucleosome is a histone octamer containing two molecules each of H2A, H2B, H3 and H4 assembled in one H3-H4 heterotetramer and two H2A-H2B heterodimers. The octamer wraps approximately 147 bp of DNA. Interacts with numerous proteins required for DNA damage signaling and repair when phosphorylated on Ser-140. These include MDC1, BRCA1 and the MRN complex, composed of MRE11, RAD50, and NBN. Interaction with the MRN complex is mediated at least in part by NBN. Also interacts with DHX9/NDHII when phosphorylated on Ser-140 and MCPH1 when phosphorylated at Ser-140 or Tyr-143. Interacts with ARRB2; the interaction is detected in the nucleus upon OR1D2 stimulation. Interacts with WRAP53/TCAB1. Interacts with TP53BP1. Interacts with HDGFL2. Post-translationally, phosphorylated on Ser-140 (to form gamma-H2AX or H2AX139ph) in response to DNA double strand breaks (DSBs) generated by exogenous genotoxic agents, by stalled replication forks, by meiotic recombination events and during immunoglobulin class switching in lymphocytes. Phosphorylation can extend up to several thousand nucleosomes from the actual site of the DSB and may mark the surrounding chromatin for recruitment of proteins required for DNA damage signaling and repair. Widespread phosphorylation may also serve to amplify the damage signal or aid repair of persistent lesions. Phosphorylation of Ser-140 (H2AX139ph) in response to ionizing radiation is mediated by both ATM and PRKDC while defects in DNA replication induce Ser-140 phosphorylation (H2AX139ph) subsequent to activation of ATR and PRKDC. Dephosphorylation of Ser-140 by PP2A is required for DNA DSB repair. In meiosis, Ser-140 phosphorylation (H2AX139ph) first occurs at synaptonemal complexes during leptotene and is an ATM-dependent response to the formation of programmed DSBs by SPO11. Ser-140 phosphorylation (H2AX139ph) subsequently occurs at unsynapsed regions of both autosomes and the XY bivalent during zygotene and is ATR- and BRCA1-dependent. Ser-140 phosphorylation (H2AX139ph) may also be required for transcriptional repression of unsynapsed chromatin and meiotic sex chromosome inactivation (MSCI), whereby the X and Y chromosomes condense in pachytene to form the heterochromatic XY-body. During immunoglobulin class switch recombination in lymphocytes, Ser-140 phosphorylation (H2AX139ph) at sites of DNA-recombination requires the activation-induced cytidine deaminase AICDA. Phosphorylation at Tyr-143 (H2AXY142ph) by BAZ1B/WSTF determines the relative recruitment of either DNA repair or pro-apoptotic factors. Phosphorylation at Tyr-143 (H2AXY142ph) favors the recruitment of APBB1/FE65 and pro-apoptosis factors such as MAPK8/JNK1, triggering apoptosis. In contrast, dephosphorylation of Tyr-143 by EYA proteins (EYA1, EYA2, EYA3 or EYA4) favors the recruitment of MDC1-containing DNA repair complexes to the tail of phosphorylated Ser-140 (H2AX139ph). Phosphorylated by VRK1. Monoubiquitination of Lys-120 (H2AXK119ub) by RING1 and RNF2/RING2 complex gives a specific tag for epigenetic transcriptional repression. Following DNA double-strand breaks (DSBs), it is ubiquitinated through 'Lys-63' linkage of ubiquitin moieties by the E2 ligase UBE2N and the E3 ligases RNF8 and RNF168, leading to the recruitment of repair proteins to sites of DNA damage. Ubiquitination at Lys-14 and Lys-16 (H2AK13Ub and H2AK15Ub, respectively) in response to DNA damage is initiated by RNF168 that mediates monoubiquitination at these 2 sites, and 'Lys-63'-linked ubiquitin are then conjugated to monoubiquitin; RNF8 is able to extend 'Lys-63'-linked ubiquitin chains in vitro. H2AK119Ub and ionizing radiation-induced 'Lys-63'-linked ubiquitination (H2AK13Ub and H2AK15Ub) are distinct events. In terms of processing, acetylation at Lys-6 (H2AXK5ac) by KAT5 component of the NuA4 histone acetyltransferase complex promotes NBN/NBS1 assembly at the sites of DNA damage. Acetylation at Lys-37 increases in S and G2 phases. This modification has been proposed to be important for DNA double-strand break repair. As to expression, most abundant in testis, thymus and spleen.

The protein localises to the nucleus. Its subcellular location is the chromosome. Its function is as follows. Variant histone H2A which replaces conventional H2A in a subset of nucleosomes. Nucleosomes wrap and compact DNA into chromatin, limiting DNA accessibility to the cellular machineries which require DNA as a template. Histones thereby play a central role in transcription regulation, DNA repair, DNA replication and chromosomal stability. DNA accessibility is regulated via a complex set of post-translational modifications of histones, also called histone code, and nucleosome remodeling. Required for checkpoint-mediated arrest of cell cycle progression in response to low doses of ionizing radiation and for efficient repair of DNA double strand breaks (DSBs) specifically when modified by C-terminal phosphorylation. The protein is Histone H2AX of Mus musculus (Mouse).